Here is a 253-residue protein sequence, read N- to C-terminus: Imidazole glycerol phosphate synthase subunit HisF (253 aa).

Active-site residues include Asp11 and Asp130.

It belongs to the HisA/HisF family. As to quaternary structure, heterodimer of HisH and HisF.

Its subcellular location is the cytoplasm. It catalyses the reaction 5-[(5-phospho-1-deoxy-D-ribulos-1-ylimino)methylamino]-1-(5-phospho-beta-D-ribosyl)imidazole-4-carboxamide + L-glutamine = D-erythro-1-(imidazol-4-yl)glycerol 3-phosphate + 5-amino-1-(5-phospho-beta-D-ribosyl)imidazole-4-carboxamide + L-glutamate + H(+). It functions in the pathway amino-acid biosynthesis; L-histidine biosynthesis; L-histidine from 5-phospho-alpha-D-ribose 1-diphosphate: step 5/9. Its function is as follows. IGPS catalyzes the conversion of PRFAR and glutamine to IGP, AICAR and glutamate. The HisF subunit catalyzes the cyclization activity that produces IGP and AICAR from PRFAR using the ammonia provided by the HisH subunit. This chain is Imidazole glycerol phosphate synthase subunit HisF, found in Acidithiobacillus ferrooxidans (strain ATCC 23270 / DSM 14882 / CIP 104768 / NCIMB 8455) (Ferrobacillus ferrooxidans (strain ATCC 23270)).